We begin with the raw amino-acid sequence, 603 residues long: Matrix metalloproteinase-17 (603 aa).

Positions 1 to 35 are cleaved as a signal peptide; the sequence is MRRRAARGPGPPPPGPGLSRLPLPLLLLLALGTRG. Positions 36–125 are excised as a propeptide; sequence GCAAPAPAPR…PVLTQARRRR (90 aa). Positions 108 to 115 match the Cysteine switch motif; it reads PRCSLPDL. Cysteine 110 contributes to the Zn(2+) binding site. The N-linked (GlcNAc...) asparagine glycan is linked to asparagine 137. Histidine 248 contacts Zn(2+). Glutamate 249 is a catalytic residue. Residues histidine 252 and histidine 258 each contribute to the Zn(2+) site. The disordered stretch occupies residues 301–329; the sequence is SPTAQPEEPPLLPEPPDNRSSAPPRKDVP. Asparagine 318 carries N-linked (GlcNAc...) asparagine glycosylation. Cysteine 332 and cysteine 523 form a disulfide bridge. 4 Hemopexin repeats span residues 333-378, 382-427, 428-475, and 476-523; these read STHF…WRGL, LDSV…FSLP, PGGI…WRGV, and PSTL…WLVC. The tract at residues 537–571 is disordered; that stretch reads DAAEGPRAPPGQHDQSRSEDGYEVCSCTSGASSPP. A lipid anchor (GPI-anchor amidated serine) is attached at serine 565. Residues 566–603 constitute a propeptide, removed in mature form; sequence GASSPPGAPGPLVAATMLLLLPPLSPGALWTAAQALTL.

It belongs to the peptidase M10A family. The cofactor is Zn(2+). Ca(2+) serves as cofactor. In terms of processing, the precursor is cleaved by a furin endopeptidase. In terms of tissue distribution, expressed in brain, leukocytes, colon, ovary testis and breast cancer. Expressed also in many transformed and non-transformed cell types.

It is found in the cell membrane. Its subcellular location is the secreted. The protein localises to the extracellular space. The protein resides in the extracellular matrix. Its function is as follows. Endopeptidase that degrades various components of the extracellular matrix, such as fibrin. May be involved in the activation of membrane-bound precursors of growth factors or inflammatory mediators, such as tumor necrosis factor-alpha. May also be involved in tumoral process. Cleaves pro-TNF-alpha at the '74-Ala-|-Gln-75' site. Not obvious if able to proteolytically activate progelatinase A. Does not hydrolyze collagen types I, II, III, IV and V, gelatin, fibronectin, laminin, decorin nor alpha1-antitrypsin. The protein is Matrix metalloproteinase-17 (MMP17) of Homo sapiens (Human).